The following is a 309-amino-acid chain: Oxygen-dependent coproporphyrinogen-III oxidase (309 aa).

Substrate is bound at residue Ser94. Positions 98 and 108 each coordinate a divalent metal cation. Catalysis depends on His108, which acts as the Proton donor. A substrate-binding site is contributed by 110–112; sequence NVR. His147 and His177 together coordinate a divalent metal cation. The important for dimerization stretch occupies residues 242–277; that stretch reads YVEFNLVWDRGTLFGLQTGGRTESILMSLPPLVRWE. Position 260–262 (260–262) interacts with substrate; the sequence is GGR.

Belongs to the aerobic coproporphyrinogen-III oxidase family. In terms of assembly, homodimer. The cofactor is a divalent metal cation.

It is found in the cytoplasm. The enzyme catalyses coproporphyrinogen III + O2 + 2 H(+) = protoporphyrinogen IX + 2 CO2 + 2 H2O. Its pathway is porphyrin-containing compound metabolism; protoporphyrin-IX biosynthesis; protoporphyrinogen-IX from coproporphyrinogen-III (O2 route): step 1/1. Involved in the heme biosynthesis. Catalyzes the aerobic oxidative decarboxylation of propionate groups of rings A and B of coproporphyrinogen-III to yield the vinyl groups in protoporphyrinogen-IX. This is Oxygen-dependent coproporphyrinogen-III oxidase from Yersinia pestis bv. Antiqua (strain Antiqua).